Consider the following 531-residue polypeptide: Inactive beta-amylase 4, chloroplastic (531 aa).

A chloroplast-targeting transit peptide spans 1 to 62 (MTETGVIGCG…KRGRFITKLR (62 aa)).

The protein belongs to the glycosyl hydrolase 14 family. Preferentially expressed in vascular tissue of cotyledons, leaves, petioles, stems, petals, siliques and roots, particularly in phloem. Also present in root tip.

It is found in the plastid. The protein localises to the chloroplast. In terms of biological role, no alpha-1,4-glucan hydrolase activity, including beta-amylase, alpha-amylase, a-glucosidase or alpha-amyloglucosidase. However, facilitates or regulates starch breakdown, especially at night, by a mechanism involving direct interaction with starch or other alpha-1,4-glucan. The sequence is that of Inactive beta-amylase 4, chloroplastic (BAM4) from Arabidopsis thaliana (Mouse-ear cress).